A 347-amino-acid polypeptide reads, in one-letter code: DNA-directed RNA polymerase subunit alpha (347 aa).

The tract at residues methionine 1–asparagine 226 is alpha N-terminal domain (alpha-NTD). An alpha C-terminal domain (alpha-CTD) region spans residues histidine 243–leucine 347.

Belongs to the RNA polymerase alpha chain family. Homodimer. The RNAP catalytic core consists of 2 alpha, 1 beta, 1 beta' and 1 omega subunit. When a sigma factor is associated with the core the holoenzyme is formed, which can initiate transcription.

The enzyme catalyses RNA(n) + a ribonucleoside 5'-triphosphate = RNA(n+1) + diphosphate. In terms of biological role, DNA-dependent RNA polymerase catalyzes the transcription of DNA into RNA using the four ribonucleoside triphosphates as substrates. This Mycobacterium bovis (strain ATCC BAA-935 / AF2122/97) protein is DNA-directed RNA polymerase subunit alpha.